We begin with the raw amino-acid sequence, 141 residues long: Large ribosomal subunit protein uL22 (141 aa).

Residues 110–141 are disordered; sequence EEKKTVAKKTTTTKAPAKKTTSTKKATAKKES. Positions 117-134 are enriched in low complexity; it reads KKTTTTKAPAKKTTSTKK.

The protein belongs to the universal ribosomal protein uL22 family. As to quaternary structure, part of the 50S ribosomal subunit.

Functionally, this protein binds specifically to 23S rRNA; its binding is stimulated by other ribosomal proteins, e.g. L4, L17, and L20. It is important during the early stages of 50S assembly. It makes multiple contacts with different domains of the 23S rRNA in the assembled 50S subunit and ribosome. The globular domain of the protein is located near the polypeptide exit tunnel on the outside of the subunit, while an extended beta-hairpin is found that lines the wall of the exit tunnel in the center of the 70S ribosome. This is Large ribosomal subunit protein uL22 from Campylobacter jejuni subsp. doylei (strain ATCC BAA-1458 / RM4099 / 269.97).